The chain runs to 803 residues: Volume-regulated anion channel subunit LRRC8B (803 aa).

Residues 1 to 25 are Cytoplasmic-facing; that stretch reads MITLTELKCLADAQSSYHILKPWWD. A helical membrane pass occupies residues 26 to 46; sequence VFWYYITLIMLLVAVLAGALQ. At 47–119 the chain is on the extracellular side; the sequence is LTQSRVLCCL…YEKQLHWFAK (73 aa). 2 cysteine pairs are disulfide-bonded: cysteine 55-cysteine 304 and cysteine 109-cysteine 289. The N-linked (GlcNAc...) asparagine glycan is linked to asparagine 78. A helical membrane pass occupies residues 120–140; it reads FFPYLVLLHTLIFAACSNFWL. Residues 141-261 lie on the Cytoplasmic side of the membrane; the sequence is HYPSTSSRLE…DIIYRVYLKQ (121 aa). Phosphoserine is present on residues serine 186 and serine 196. A helical transmembrane segment spans residues 262-282; sequence IIVKVILFVLIITYVPYFLSY. Topologically, residues 283–307 are extracellular; sequence ITLEIDCSIDVQAFTGYKRYQCVYS. Residues 308 to 328 form a helical membrane-spanning segment; that stretch reads LAEIFKVLASFYVILVMLYGL. The Cytoplasmic portion of the chain corresponds to 329–803; the sequence is TSSYSLWWML…ERLQTCLDKC (475 aa). 15 LRR repeats span residues 415 to 439, 440 to 462, 464 to 486, 488 to 509, 511 to 532, 539 to 559, 562 to 582, 586 to 607, 609 to 630, 634 to 655, 657 to 678, 680 to 701, 703 to 724, 726 to 747, and 749 to 771; these read VKNSQDKVELHLFMLNGLPDNVFEL, TEMEVLSLELIPEVKLPAAVAQL, NLRELHVYHSSLVVDHPALAFLE, NLRILRLKFTEMGKIPRWVFHL, NLKELYLSGCVLPEQLSSLHLE, NLRTLYLKSSLSRIPQVVTDL, SLQKLSLDNEGSKLVVLNNLK, NLKSLELLSCDLERIPHSIFSL, NLHELDLKENNLKTVEEIISFQ, SLSCLKLWHNNIAYIPAQIGAL, NLEQLFLGHNNIESLPLQLFLC, KLHYLDLSYNHLTFIPEEIQYL, NLQYFAVTNNNIEMLPDGLFQC, KLQCLLLGRNSLTDLSPLVGEL, and NLTHLELTGNYLETLPVELEGCQ.

The protein belongs to the LRRC8 family. Heterohexamer; oligomerizes with other LRRC8 proteins (LRRC8A, LRRC8C, LRRC8D and/or LRRC8E) to form a heterohexamer. In vivo, the subunit composition may depend primarily on expression levels, and heterooligomeric channels containing various proportions of the different LRRC8 proteins may coexist.

The protein localises to the cell membrane. Its subcellular location is the endoplasmic reticulum membrane. It carries out the reaction chloride(in) = chloride(out). It catalyses the reaction iodide(out) = iodide(in). The enzyme catalyses taurine(out) = taurine(in). Non-essential component of the volume-regulated anion channel (VRAC, also named VSOAC channel), an anion channel required to maintain a constant cell volume in response to extracellular or intracellular osmotic changes. The VRAC channel conducts iodide better than chloride and can also conduct organic osmolytes like taurine. Channel activity requires LRRC8A plus at least one other family member (LRRC8B, LRRC8C, LRRC8D or LRRC8E); channel characteristics depend on the precise subunit composition. The chain is Volume-regulated anion channel subunit LRRC8B from Mus musculus (Mouse).